The sequence spans 448 residues: Vicilin Cor a 11.0101 (448 aa).

Over residues 1-44 the composition is skewed to basic and acidic residues; the sequence is MLPKEDPELKKCKHKCRDERQFDEQQRRDGKQICEEKARERQQE. A disordered region spans residues 1-66; the sequence is MLPKEDPELK…QEENPYVFQD (66 aa). Residue Asn-47 is glycosylated (N-linked (GlcNAc...) asparagine). Cupin type-1 domains follow at residues 84–220 and 263–418; these read ENFT…EQLE and INLL…REVE. An N-linked (GlcNAc...) asparagine glycan is attached at Asn-301. Residues Cys-333, His-335, and His-362 each coordinate Cu cation.

The protein belongs to the 7S seed storage protein family. As to quaternary structure, homotrimer. Homohexamer. Post-translationally, N-glycosylated at Asn-301 mostly with xylosylated paucimannosidic-type N-glycan MMX (an N-linked glycan with beta-1,2-xylose residue in the structure) and also with MMXF (a complex N-linked glycan with alpha-1,3-fucose and beta-1,2-xylose residues in the structure). In terms of processing, a mixture of proteolytically processed and unprocessed subunits exist. Expressed in seed (at protein level). Expressed in seed.

Its function is as follows. Seed storage protein. Does not have superoxide dismutase (SOD) activity. This chain is Vicilin Cor a 11.0101, found in Corylus avellana (European hazel).